Consider the following 202-residue polypeptide: N-(5'-phosphoribosyl)anthranilate isomerase (202 aa).

This sequence belongs to the TrpF family.

It carries out the reaction N-(5-phospho-beta-D-ribosyl)anthranilate = 1-(2-carboxyphenylamino)-1-deoxy-D-ribulose 5-phosphate. It functions in the pathway amino-acid biosynthesis; L-tryptophan biosynthesis; L-tryptophan from chorismate: step 3/5. This is N-(5'-phosphoribosyl)anthranilate isomerase from Geobacter metallireducens (strain ATCC 53774 / DSM 7210 / GS-15).